Here is a 191-residue protein sequence, read N- to C-terminus: Putative glutathione-dependent formaldehyde-activating enzyme (191 aa).

One can recognise a CENP-V/GFA domain in the interval 20–166; it reads FSGGTLRCHC…FKSVGLETYD (147 aa). Zn(2+) is bound by residues Cys-27, Cys-29, Cys-48, Cys-50, Cys-53, Cys-95, and Cys-98.

It belongs to the Gfa family. It depends on Zn(2+) as a cofactor.

It carries out the reaction S-(hydroxymethyl)glutathione = glutathione + formaldehyde. It participates in one-carbon metabolism; formaldehyde degradation; formate from formaldehyde (glutathione route): step 1/3. Its function is as follows. Catalyzes the condensation of formaldehyde and glutathione to S-hydroxymethylglutathione. The sequence is that of Putative glutathione-dependent formaldehyde-activating enzyme from Colletotrichum graminicola (strain M1.001 / M2 / FGSC 10212) (Maize anthracnose fungus).